A 173-amino-acid polypeptide reads, in one-letter code: Transmembrane protein 240 (173 aa).

2 helical membrane passes run 5–25 (ANTM…ACLM) and 90–110 (LMLG…MDGV). At Ser-169 the chain carries Phosphoserine.

It localises to the synapse. Its subcellular location is the cell membrane. The chain is Transmembrane protein 240 (Tmem240) from Mus musculus (Mouse).